The chain runs to 337 residues: tRNA N6-adenosine threonylcarbamoyltransferase (337 aa).

The Fe cation site is built by His-111 and His-115. Substrate is bound by residues 134-138 (LVSGG), Asp-167, Gly-180, and Asn-272. Residue Asp-300 participates in Fe cation binding.

Belongs to the KAE1 / TsaD family. Fe(2+) is required as a cofactor.

It is found in the cytoplasm. The enzyme catalyses L-threonylcarbamoyladenylate + adenosine(37) in tRNA = N(6)-L-threonylcarbamoyladenosine(37) in tRNA + AMP + H(+). Functionally, required for the formation of a threonylcarbamoyl group on adenosine at position 37 (t(6)A37) in tRNAs that read codons beginning with adenine. Is involved in the transfer of the threonylcarbamoyl moiety of threonylcarbamoyl-AMP (TC-AMP) to the N6 group of A37, together with TsaE and TsaB. TsaD likely plays a direct catalytic role in this reaction. The protein is tRNA N6-adenosine threonylcarbamoyltransferase of Shewanella loihica (strain ATCC BAA-1088 / PV-4).